Here is an 815-residue protein sequence, read N- to C-terminus: Cell division cycle protein 48 (815 aa).

Residues 1–30 (MNAPSTMTDKKPEVEHLQGENPPKDTYSAE) are disordered. Positions 8-18 (TDKKPEVEHLQ) are enriched in basic and acidic residues. ATP is bound by residues 267–273 (PGTGKTL), Asn-368, His-404, and 541–546 (GTGKTL). The disordered stretch occupies residues 794-815 (DSADSNTNGPSFGNDGADDLYA). Residues 795–804 (SADSNTNGPS) show a composition bias toward polar residues.

The protein belongs to the AAA ATPase family. As to quaternary structure, component of the ribosome quality control complex (RQC), composed of the E3 ubiquitin ligase rkr1/ltn1, rqc1 and mtr1/rqc2, as well as cdc48 and its ubiquitin-binding cofactors. RQC forms a stable complex with 60S ribosomal subunits. Interacts with ubx2 and ubx3. Interacts with lub1. Interacts with rbd2 (via C-terminal SHP box); the interaction is required for rbd2-mediated cleavage of sre1 and sre2.

Its subcellular location is the cytoplasm. It localises to the nucleus. The enzyme catalyses ATP + H2O = ADP + phosphate + H(+). The first ATP-binding region has low ATPase activity. The second ATP-binding region is responsible for ATPase activity. ATP binding to the first ATP-binding region induces intrinsic activity of the second ATP-binding region. While ATP binding to the first ATP-binding region appears to prevent ATP hydrolysis by the second ATP-binding region, ADP-binding to first region promotes the coordinate and cooperative ATPase cycle of the second ATP-binding region. ATP binding to the first ATP-binding region induces a conformational change, promoting the rotation of the first ATP-binding region relative to the second ATP-binding region in the hexamer. ATP-dependent chaperone which probably uses the energy provided by ATP hydrolysis to generate mechanical force to unfold substrate proteins, disassemble protein complexes, and disaggregate protein aggregates. By recruiting and promoting the degradation of ubiquitinated proteins, plays a role in the ubiquitin fusion degradation (UFD) pathway. Has a role in the endoplasmic reticulum-associated degradation (ERAD) pathway which mediates the cytoplasmic elimination of misfolded proteins exported from the ER. Involved in spindle disassembly. Component of the ribosome quality control complex (RQC), a ribosome-associated complex that mediates ubiquitination and extraction of incompletely synthesized nascent chains for proteasomal degradation. CDC48 may provide the mechanical force that dislodges the polyubiquitinated nascent peptides from the exit channel. Required for ribophagy, a process which relocalizes ribosomal particles into the vacuole for degradation in response to starvation. Has a role in substrate recognition mediating rbd2-dependent cleavage of sterol regulatory element-binding protein sre1 and sre2. In Schizosaccharomyces pombe (strain 972 / ATCC 24843) (Fission yeast), this protein is Cell division cycle protein 48.